Reading from the N-terminus, the 250-residue chain is Probable xyloglucan-specific endo-beta-1,4-glucanase A (250 aa).

The first 19 residues, 1-19, serve as a signal peptide directing secretion; that stretch reads MKLSVLSLASLASAAALNA. N72 carries N-linked (GlcNAc...) asparagine glycosylation.

It belongs to the glycosyl hydrolase 12 (cellulase H) family.

It is found in the secreted. It catalyses the reaction xyloglucan + H2O = xyloglucan oligosaccharides.. In terms of biological role, catalyzes endohydrolysis of 1,4-beta-D-glucosidic linkages in xyloglucan with retention of the beta-configuration of the glycosyl residues. Specific for xyloglucan and does not hydrolyze other cell wall components. This is Probable xyloglucan-specific endo-beta-1,4-glucanase A (xgeA) from Aspergillus terreus (strain NIH 2624 / FGSC A1156).